Consider the following 742-residue polypeptide: Zinc transporter ZIP6 (742 aa).

Residues 1–353 are Extracellular-facing; that stretch reads MMTFLCTRSG…QRNTPVYIAW (353 aa). N-linked (GlcNAc...) asparagine glycans are attached at residues Asn-94 and Asn-127. 2 disordered regions span residues 148–182 and 191–210; these read PVTT…SQSD and MNQE…RSRR. The span at 152-165 shows a compositional bias: basic and acidic residues; that stretch reads KKGDMDHSVEKSDP. Residues 192–206 are compositionally biased toward polar residues; sequence NQESTTALTTPSYVT. Asn-212, Asn-232, and Asn-237 each carry an N-linked (GlcNAc...) asparagine glycan. Positions 220–260 are disordered; it reads TQDHASFSPSQPNVTHSNHTHHDEDTPTHQHDDHDEHEHAR. A compositionally biased stretch (polar residues) spans 222-236; it reads DHASFSPSQPNVTHS. Basic and acidic residues predominate over residues 239–260; sequence THHDEDTPTHQHDDHDEHEHAR. N-linked (GlcNAc...) asparagine glycosylation is found at Asn-267 and Asn-337. Positions 310–342 are disordered; that stretch reads EDEHSDHSHHHKHHHHHHDHQHLQHPHNHTNGR. Over residues 316 to 339 the composition is skewed to basic residues; the sequence is HSHHHKHHHHHHDHQHLQHPHNHT. The chain crosses the membrane as a helical span at residues 354-374; that stretch reads LGGFLSITLISLLALVGVVLI. Topologically, residues 375–385 are cytoplasmic; it reads PLMNRVCFNFL. The helical transmembrane segment at 386–406 threads the bilayer; it reads LSFLVALAVGTLSGDALLHLI. At 407–430 the chain is on the extracellular side; sequence PHSQGHHHHGHSEEHAEEEDSLRP. A helical transmembrane segment spans residues 431-451; that stretch reads VWTGLTALSGVYIMFLIEHFL. The Cytoplasmic segment spans residues 452–644; that stretch reads TLGKMYKDKN…LKAGMSVRQA (193 aa). Residues 645 to 665 form a helical membrane-spanning segment; that stretch reads MLYNLLSALMGYLGMIIGILI. Residues 666–671 are Extracellular-facing; it reads GHYAEN. A helical transmembrane segment spans residues 672 to 692; that stretch reads VATWIFALTAGLFMYVALVDM. Topologically, residues 693-710 are cytoplasmic; the sequence is VPEMLHNDASEAGFSHYG. Residues 711 to 731 traverse the membrane as a helical segment; it reads FFLLQNAGILLGFGIMLIIAV. The Extracellular portion of the chain corresponds to 732 to 742; it reads FEDRIQLDLGY.

Belongs to the ZIP transporter (TC 2.A.5) family. Post-translationally, cleaved on the N-terminus before locating to the plasma membrane. In terms of processing, N-glycosylated.

Its subcellular location is the cell membrane. The enzyme catalyses Zn(2+)(in) = Zn(2+)(out). Its function is as follows. Acts as a zinc-influx transporter which plays a role in zinc homeostasis and in the induction of epithelial-to-mesenchymal transition (EMT). This Danio rerio (Zebrafish) protein is Zinc transporter ZIP6.